The primary structure comprises 379 residues: MDKQDEKKQGTTKSSSTLTTRCSHGNHISQSNSIPLDITIEILSRLPAKSIVRSRSVSKLWSSITTTPEFIKHRSKKTSPPCVLLIFRKHDKLIVFSSPQHQNTYSHVQDYHIEIPKNGFIRRLDSVHGLICLEGSKQLVICNPTLKRFFPLPEPQGTGDEYNVGGFLGYEPIEGKYKALCIVRGWNTQVLTLEIQESWRVTKPGYTHWPTKDTGRCINGVIYYKAIIFDRVPRHVIFGFDLRYEEFTHIEFPMRNYDRFLMVSYEGRLALISSTSSVVEIWSLEDAGNRKWSYEQFHLCLPPNTSLKGVIDAGELIYTGFSLNRSFCVVYFDPKKNNIRETKFQGIADNQIWQPDRLGFDLVNDFYVLPNHIESFISF.

The interval 1-26 (MDKQDEKKQGTTKSSSTLTTRCSHGN) is disordered. The span at 11-26 (TTKSSSTLTTRCSHGN) shows a compositional bias: polar residues. Positions 28-74 (ISQSNSIPLDITIEILSRLPAKSIVRSRSVSKLWSSITTTPEFIKHR) constitute an F-box domain.

The chain is F-box protein At5g18160 from Arabidopsis thaliana (Mouse-ear cress).